Reading from the N-terminus, the 164-residue chain is Thiol peroxidase (164 aa).

The Thioredoxin domain maps to 18 to 163; sequence INEGDFAPDF…FDAALAAYKN (146 aa). The active-site Cysteine sulfenic acid (-SOH) intermediate is Cys60. A disulfide bond links Cys60 and Cys93.

It belongs to the peroxiredoxin family. Tpx subfamily. In terms of assembly, homodimer.

It carries out the reaction a hydroperoxide + [thioredoxin]-dithiol = an alcohol + [thioredoxin]-disulfide + H2O. Thiol-specific peroxidase that catalyzes the reduction of hydrogen peroxide and organic hydroperoxides to water and alcohols, respectively. Plays a role in cell protection against oxidative stress by detoxifying peroxides. This is Thiol peroxidase from Staphylococcus aureus (strain MRSA252).